The chain runs to 144 residues: Ribosome maturation factor RimP (144 aa).

Belongs to the RimP family.

Its subcellular location is the cytoplasm. Its function is as follows. Required for maturation of 30S ribosomal subunits. The chain is Ribosome maturation factor RimP from Methylobacillus flagellatus (strain ATCC 51484 / DSM 6875 / VKM B-1610 / KT).